The primary structure comprises 934 residues: Aconitate hydratase A (934 aa).

The segment at 398 to 454 (EPVDESLPAKRMDSEGAVQKEGEDVAGYNSSRAGHGESAAEGAAGRQSNPVVVSSPN) is disordered. The span at 404–420 (LPAKRMDSEGAVQKEGE) shows a compositional bias: basic and acidic residues. The segment covering 427–445 (SSRAGHGESAAEGAAGRQS) has biased composition (low complexity). [4Fe-4S] cluster contacts are provided by C473, C539, and C542.

It belongs to the aconitase/IPM isomerase family. In terms of assembly, monomer. [4Fe-4S] cluster serves as cofactor.

The catalysed reaction is citrate = D-threo-isocitrate. It carries out the reaction (2S,3R)-3-hydroxybutane-1,2,3-tricarboxylate = 2-methyl-cis-aconitate + H2O. It participates in carbohydrate metabolism; tricarboxylic acid cycle; isocitrate from oxaloacetate: step 2/2. The protein operates within organic acid metabolism; propanoate degradation. Involved in the catabolism of short chain fatty acids (SCFA) via the tricarboxylic acid (TCA)(acetyl degradation route) and probably via the 2-methylcitrate cycle I (propionate degradation route). Catalyzes the reversible isomerization of citrate to isocitrate via cis-aconitate. Could catalyze the hydration of 2-methyl-cis-aconitate to yield (2R,3S)-2-methylisocitrate. The apo form of AcnA functions as a RNA-binding regulatory protein. This Corynebacterium diphtheriae (strain ATCC 700971 / NCTC 13129 / Biotype gravis) protein is Aconitate hydratase A (acn).